The chain runs to 866 residues: Replication factor C small subunit (866 aa).

In terms of domain architecture, DOD-type homing endonuclease spans 183–313; the sequence is WLGYFIGDGH…VTYALAGFGI (131 aa).

Belongs to the activator 1 small subunits family. RfcS subfamily. In terms of assembly, heteromultimer composed of small subunits (RfcS) and large subunits (RfcL). This protein undergoes a protein self splicing that involves a post-translational excision of the intervening region (intein) followed by peptide ligation.

Its function is as follows. Part of the RFC clamp loader complex which loads the PCNA sliding clamp onto DNA. The chain is Replication factor C small subunit (rfcS) from Thermococcus kodakarensis (strain ATCC BAA-918 / JCM 12380 / KOD1) (Pyrococcus kodakaraensis (strain KOD1)).